A 627-amino-acid polypeptide reads, in one-letter code: Zinc cluster transcription factor acuM (627 aa).

Disordered stretches follow at residues 1–40 (MGCR…PARP), 129–148 (NGTA…GTME), 155–193 (AEGD…RRKV), 225–258 (CHDE…FSNA), 277–305 (PDGT…QNSL), and 394–416 (AQPS…PSST). A compositionally biased stretch (polar residues) spans 162–171 (MESGSKNTAS). A DNA-binding region (zn(2)-C6 fungal-type) is located at residues 197–225 (CVYCRRSHMTCDSERPCTRCIKRNIGHLC). Over residues 225–251 (CHDEPREPSKRARSEHEHSTAEEDGHS) the composition is skewed to basic and acidic residues. Polar residues predominate over residues 286 to 305 (SSVSAVQHNTIPSSSAQNSL). Residues 394–403 (AQPSQPTQSQ) show a composition bias toward low complexity. The span at 404-416 (PHQNDSVQGPSST) shows a compositional bias: polar residues.

Its subcellular location is the nucleus. In terms of biological role, transcription factor that governs genes involved in reductive and siderophore-mediated iron acquisition, and carbon metabolism. Suppresses the expression of sreA and induces hapX to stimulate expression of genes involved in both reductive iron assimilation and siderophore-mediated iron uptake which is essential for the maximal virulence. Also regulates genes involved in gluconeogenesis. In Aspergillus fumigatus (strain ATCC MYA-4609 / CBS 101355 / FGSC A1100 / Af293) (Neosartorya fumigata), this protein is Zinc cluster transcription factor acuM.